Here is a 1195-residue protein sequence, read N- to C-terminus: Zinc finger and BTB domain-containing protein 38 (1195 aa).

The BTB domain occupies 33 to 100 (CDVTIIVEDT…IYSSTVVVKR (68 aa)). A Glycyl lysine isopeptide (Lys-Gly) (interchain with G-Cter in SUMO2) cross-link involves residue Lys-43. Ser-130 is modified (phosphoserine). Residues Lys-145, Lys-148, Lys-151, and Lys-259 each participate in a glycyl lysine isopeptide (Lys-Gly) (interchain with G-Cter in SUMO2) cross-link. The interval 264-334 (RKPKTFSIPQ…QSSDVPGPPA (71 aa)) is disordered. Residues 270-280 (SIPQDSDSATE) are compositionally biased toward polar residues. Residues 300–523 (PAAVLTRSKS…RRYQCIFCLE (224 aa)) are interaction with CBFA2T3. At Ser-309 the chain carries Phosphoserine. The segment covering 314-323 (GDVHFSREDE) has biased composition (basic and acidic residues). A C2H2-type 1 zinc finger spans residues 342–364 (YNCSCCSKAFDSSTLLSAHMQLH). A C2H2-type 2; degenerate zinc finger spans residues 371-395 (LVCKYCNKQFTTLNRLDRHEQICMR). C2H2-type zinc fingers lie at residues 460–482 (YSCV…ANVH), 488–510 (YPCH…EIWH), and 516–539 (YQCI…KSFH). Residues Lys-550, Lys-557, Lys-754, Lys-758, Lys-763, Lys-804, Lys-814, Lys-821, Lys-842, Lys-850, and Lys-857 each participate in a glycyl lysine isopeptide (Lys-Gly) (interchain with G-Cter in SUMO2) cross-link. Positions 745-804 (SDPAVSQSLKDDSKPEPDKVGRFASRPKSIKEKKKTTSHTRGEIPEESNYVADPGGSLSK) are disordered. Residues 753-765 (LKDDSKPEPDKVG) show a composition bias toward basic and acidic residues. Disordered regions lie at residues 871 to 891 (QEEP…PLGL) and 903 to 922 (FDDA…YYNY). Glycyl lysine isopeptide (Lys-Gly) (interchain with G-Cter in SUMO2) cross-links involve residues Lys-923, Lys-964, Lys-969, Lys-977, Lys-981, Lys-991, Lys-1017, and Lys-1026. 5 C2H2-type zinc fingers span residues 1010-1032 (YACE…MRCH), 1038-1060 (YQCK…ERIH), 1066-1088 (FVCQ…ERIH), 1094-1116 (YHCQ…EQRH), and 1125-1147 (YACF…QKKH). Glycyl lysine isopeptide (Lys-Gly) (interchain with G-Cter in SUMO2) cross-links involve residues Lys-1109, Lys-1132, Lys-1135, Lys-1150, and Lys-1183.

In terms of assembly, interacts with CBFA2T3. Interacts with ZBTB4. Interacts with RBBP6. Post-translationally, ubiquitinated by RBBP6; leading to its degradation by the proteasome.

It is found in the nucleus. It localises to the chromosome. Its function is as follows. Transcriptional regulator with bimodal DNA-binding specificity. Binds with a higher affinity to methylated CpG dinucleotides in the consensus sequence 5'-CGCG-3' but can also bind to E-box elements (5'-CACGTG-3'). Can also bind specifically to a single methyl-CpG pair. Represses transcription in a methyl-CpG-dependent manner. Plays an important role in regulating DNA replication and common fragile sites (CFS) stability in a RBBP6- and MCM10-dependent manner; represses expression of MCM10 which plays an important role in DNA-replication. Acts as a transcriptional activator. May be involved in the differentiation and/or survival of late postmitotic neurons. This is Zinc finger and BTB domain-containing protein 38 from Homo sapiens (Human).